The sequence spans 66 residues: UPF0337 protein pc0632 (66 aa).

It belongs to the UPF0337 (CsbD) family.

The polypeptide is UPF0337 protein pc0632 (Protochlamydia amoebophila (strain UWE25)).